We begin with the raw amino-acid sequence, 337 residues long: tRNA N6-adenosine threonylcarbamoyltransferase (337 aa).

Residues His111 and His115 each contribute to the Fe cation site. Residues 134-138, Asp167, Gly180, and Asn272 contribute to the substrate site; that span reads LVSGG. Asp300 contributes to the Fe cation binding site.

Belongs to the KAE1 / TsaD family. Fe(2+) serves as cofactor.

Its subcellular location is the cytoplasm. It catalyses the reaction L-threonylcarbamoyladenylate + adenosine(37) in tRNA = N(6)-L-threonylcarbamoyladenosine(37) in tRNA + AMP + H(+). Required for the formation of a threonylcarbamoyl group on adenosine at position 37 (t(6)A37) in tRNAs that read codons beginning with adenine. Is involved in the transfer of the threonylcarbamoyl moiety of threonylcarbamoyl-AMP (TC-AMP) to the N6 group of A37, together with TsaE and TsaB. TsaD likely plays a direct catalytic role in this reaction. The chain is tRNA N6-adenosine threonylcarbamoyltransferase from Salmonella schwarzengrund (strain CVM19633).